A 343-amino-acid polypeptide reads, in one-letter code: Probable fructokinase-7 (343 aa).

Glycine 2 carries the post-translational modification N-acetylglycine.

The protein belongs to the carbohydrate kinase PfkB family.

It catalyses the reaction D-fructose + ATP = D-fructose 6-phosphate + ADP + H(+). Its pathway is glycan biosynthesis; starch biosynthesis. Its function is as follows. May play an important role in maintaining the flux of carbon towards starch formation. In Arabidopsis thaliana (Mouse-ear cress), this protein is Probable fructokinase-7.